The following is a 246-amino-acid chain: Adenosylcobinamide-GDP ribazoletransferase (246 aa).

A run of 6 helical transmembrane segments spans residues 34–54 (IVTFPLVGLLLGAIAGAVALL), 59–79 (CGVPLAALFGVLALALLTGGF), 113–133 (GGLALIFVLVAKVLVIGELLL), 138–158 (PIAALAAACAVGRGMAVLLMY), 171–191 (LFIGKVSLQQTLVTMAMGVAL), and 194–214 (VLLGLQGLRAALITLVLIWGL).

Belongs to the CobS family. It depends on Mg(2+) as a cofactor.

The protein localises to the cell inner membrane. The enzyme catalyses alpha-ribazole + adenosylcob(III)inamide-GDP = adenosylcob(III)alamin + GMP + H(+). It catalyses the reaction alpha-ribazole 5'-phosphate + adenosylcob(III)inamide-GDP = adenosylcob(III)alamin 5'-phosphate + GMP + H(+). Its pathway is cofactor biosynthesis; adenosylcobalamin biosynthesis; adenosylcobalamin from cob(II)yrinate a,c-diamide: step 7/7. Functionally, joins adenosylcobinamide-GDP and alpha-ribazole to generate adenosylcobalamin (Ado-cobalamin). Also synthesizes adenosylcobalamin 5'-phosphate from adenosylcobinamide-GDP and alpha-ribazole 5'-phosphate. The sequence is that of Adenosylcobinamide-GDP ribazoletransferase from Klebsiella pneumoniae (strain 342).